We begin with the raw amino-acid sequence, 702 residues long: Polyribonucleotide nucleotidyltransferase (702 aa).

Mg(2+) contacts are provided by aspartate 485 and aspartate 491. In terms of domain architecture, KH spans 552-612 (PRTEIICIDP…EGVKKAISII (61 aa)). Residues 622 to 690 (GEIYLGKVTK…NQGRINLSRK (69 aa)) form the S1 motif domain.

The protein belongs to the polyribonucleotide nucleotidyltransferase family. Requires Mg(2+) as cofactor.

The protein localises to the cytoplasm. The enzyme catalyses RNA(n+1) + phosphate = RNA(n) + a ribonucleoside 5'-diphosphate. Its function is as follows. Involved in mRNA degradation. Catalyzes the phosphorolysis of single-stranded polyribonucleotides processively in the 3'- to 5'-direction. The polypeptide is Polyribonucleotide nucleotidyltransferase (Clostridium botulinum (strain Langeland / NCTC 10281 / Type F)).